We begin with the raw amino-acid sequence, 291 residues long: Phosphate import ATP-binding protein PstB (291 aa).

The region spanning 43–286 (ANVKDLSFWY…PKHAMTEEYI (244 aa)) is the ABC transporter domain. 75–82 (GASGCGKS) serves as a coordination point for ATP.

It belongs to the ABC transporter superfamily. Phosphate importer (TC 3.A.1.7) family. As to quaternary structure, the complex is composed of two ATP-binding proteins (PstB), two transmembrane proteins (PstC and PstA) and a solute-binding protein (PstS).

Its subcellular location is the cell inner membrane. The enzyme catalyses phosphate(out) + ATP + H2O = ADP + 2 phosphate(in) + H(+). Functionally, part of the ABC transporter complex PstSACB involved in phosphate import. Responsible for energy coupling to the transport system. The sequence is that of Phosphate import ATP-binding protein PstB from Alcaligenes faecalis.